A 439-amino-acid polypeptide reads, in one-letter code: MLATEQSRPAECNGAHAHEKTEEVKKPLYSRPVVLTTYPSQSRIDPFPMNWGAATAEERGPITVARSIETLPHRNAVGAHGGSYSVYNALAVAGGFLPPDHRPNFELTEPTFDFPELDSWHDPKKIVAMDPYGHLTPSVFKKYLDEGYDVRPTIAITRAHLQVTEIQRSVENGSLPIDGKIVLNEKGDIAVTKVAVEPVWYLPGVAERFGVDEVTLRRALFEQMGGAYPELITRPDIKVFLPPIGGLTAYIFGPPEYLSDTSKSLAVRVHDECNGSDVFQSDICTCRPYLTFGIEEAAKEAQNGGAGLVVYFRKEGRALGEVVKYLVYNKRKRTGDSAENYFKRTEELAGVRDMRFQALMPDILHWFGIKKIDRMLSMSNMKHDAIVGQGIKILNRITIPDDLIPEDSQVEIDAKIQSGYFSEKKVTEDDLSCVHGRHW.

The interval 1–24 (MLATEQSRPAECNGAHAHEKTEEV) is disordered. 268–272 (RVHDE) serves as a coordination point for GTP. The Zn(2+) site is built by C273, C284, and C286. Residue 315-317 (EGR) participates in GTP binding. D353 functions as the Proton acceptor in the catalytic mechanism. R355 serves as the catalytic Nucleophile. Residues S377 and K382 each coordinate GTP.

This sequence belongs to the GTP cyclohydrolase II family.

The protein resides in the cytoplasm. The protein localises to the nucleus. The protein is Uracil-regulated protein 1 (urg1) of Schizosaccharomyces pombe (strain 972 / ATCC 24843) (Fission yeast).